The primary structure comprises 142 residues: Ribonuclease VapC31 (142 aa).

The PINc domain maps to 3 to 139 (LLDANVLLAA…ARFASVRHIR (137 aa)). Residues aspartate 5 and aspartate 108 each coordinate Mg(2+).

It belongs to the PINc/VapC protein family. Mg(2+) is required as a cofactor.

Toxic component of a type II toxin-antitoxin (TA) system. An RNase. Its toxic effect is neutralized by coexpression with cognate antitoxin VapB31. The protein is Ribonuclease VapC31 of Mycobacterium tuberculosis (strain CDC 1551 / Oshkosh).